A 309-amino-acid chain; its full sequence is MHIPVMLNEVIKSIKIIPNGTYIDATFGCGGHSRCILSKLNEKGKLIVIDRDPKSIEFACSIKDRRLIPIHGNFSKILKYSIKYKIFGKVQGILFDLGLSFSQIKDSNRGFSFMHDGPLDMRMNNLHGISAKEWINNANIKDISFVIKEFGEEKFYKKISNVICKYRKIKNINTTKELVNLINKACGYFYKKKHPARRSFQAIRIYINNELQELKLALNDIIKIISPKGRIVFISFHSLEDRIIKKFIINNSRKKIYPYKLPILESKIKNDNIYKLKYFKKIQPSKKEILYNKKSRSAILRFAEKLKYD.

S-adenosyl-L-methionine contacts are provided by residues 30–32 (GGH), aspartate 50, phenylalanine 74, aspartate 96, and glutamine 103.

It belongs to the methyltransferase superfamily. RsmH family.

Its subcellular location is the cytoplasm. It carries out the reaction cytidine(1402) in 16S rRNA + S-adenosyl-L-methionine = N(4)-methylcytidine(1402) in 16S rRNA + S-adenosyl-L-homocysteine + H(+). Specifically methylates the N4 position of cytidine in position 1402 (C1402) of 16S rRNA. The sequence is that of Ribosomal RNA small subunit methyltransferase H from Wigglesworthia glossinidia brevipalpis.